Reading from the N-terminus, the 1022-residue chain is Collagen alpha-1(I) chain (1022 aa).

Positions 1–1022 (SAGGISVPGP…PGPPGPPGPP (1022 aa)) are disordered. 4-hydroxyproline is present on residues Pro-20, Pro-23, Pro-26, Pro-35, Pro-38, Pro-41, Pro-56, Pro-71, Pro-77, Pro-86, and Pro-92. A compositionally biased stretch (low complexity) spans 28 to 47 (PQGFQGPPGEPGEPGASGPM). Residues 59–73 (NGDDGEAGKPGRPGE) show a composition bias toward basic and acidic residues. The residue at position 95 (Lys-95) is a 5-hydroxylysine; alternate. A glycan (O-linked (Gal...) hydroxylysine; alternate) is linked at Lys-95. Residue Ser-101 is modified to Phosphoserine. Positions 109-125 (DAGPAGPKGEPGSPGEN) are enriched in low complexity. Pro-119, Pro-122, Pro-128, Pro-137, Pro-143, Pro-164, Pro-173, Pro-176, Pro-203, Pro-206, Pro-218, Pro-224, Pro-233, Pro-239, Pro-242, and Pro-257 each carry 4-hydroxyproline. A compositionally biased stretch (low complexity) spans 143-161 (PGASGPAGARGNDGAAGAA). Pro residues predominate over residues 163–175 (PPGPTGPAGPPGF). The segment covering 209-259 (AGAAGPAGNPGADGQPGAKGANGAPGIAGAPGFPGARGPSGPQGPSGAPGP) has biased composition (low complexity). Position 260 is a 5-hydroxylysine (Lys-260). 8 positions are modified to 4-hydroxyproline: Pro-266, Pro-269, Pro-281, Pro-290, Pro-305, Pro-311, Pro-320, and Pro-326. The segment covering 315–324 (GERGGPGSRG) has biased composition (gly residues). The residue at position 335 (Lys-335) is a 5-hydroxylysine. Pro-344, Pro-353, Pro-359, Pro-365, Pro-374, Pro-377, Pro-386, Pro-395, Pro-401, Pro-413, Pro-422, Pro-431, Pro-434, Pro-452, Pro-470, Pro-476, Pro-482, Pro-488, Pro-494, Pro-500, Pro-512, Pro-521, Pro-533, Pro-545, Pro-548, Pro-554, Pro-560, and Pro-569 each carry 4-hydroxyproline. Low complexity predominate over residues 368–394 (KGLTGSPGSPGPDGKTGPPGPAGQDGR). The span at 403-422 (ARGQAGVMGFPGPKGAAGEP) shows a compositional bias: low complexity. A compositionally biased stretch (low complexity) spans 464 to 491 (QGPAGSPGFQGLPGPAGPPGEAGKPGEQ). Low complexity predominate over residues 530-557 (NGAPGNDGAKGDAGAPGAPGSQGAPGLQ). 5-hydroxylysine is present on Lys-581. 4-hydroxyproline occurs at positions 587, 602, and 608. Residues 614 to 628 (SGPSGPAGPTGARGA) are compositionally biased toward low complexity. Ser-617 carries the post-translational modification Phosphoserine. Pro-629, Pro-635, Pro-638, Pro-647, Pro-653, Pro-671, Pro-680, and Pro-689 each carry 4-hydroxyproline. Positions 641–668 (AGFAGPPGADGQPGAKGEPGDAGAKGDA) are enriched in low complexity. Positions 670 to 682 (PPGPAGPTGPPGP) are enriched in pro residues. Lys-692 bears the 5-hydroxylysine mark. Positions 697 to 713 (SAGPPGATGFPGAAGRV) are enriched in low complexity. 4-hydroxyproline occurs at positions 701 and 707. A 3-hydroxyproline modification is found at Pro-715. Pro-716, Pro-725, Pro-728, Pro-749, Pro-758, Pro-767, Pro-776, Pro-794, Pro-803, Pro-806, Pro-812, Pro-827, Pro-833, Pro-839, Pro-848, and Pro-854 each carry 4-hydroxyproline. Positions 742–751 (ETGPAGRPGE) are enriched in low complexity. Over residues 761-776 (TGEKGSPGADGPAGAP) the composition is skewed to low complexity. Positions 826-836 (PPGPVGPPGLA) are enriched in pro residues. Over residues 838–853 (PPGESGREGSPGAEGS) the composition is skewed to low complexity. Lys-863 is subject to 5-hydroxylysine. The span at 872–887 (AGPPGAPGAPGAPGPV) shows a compositional bias: pro residues. Residues Pro-875, Pro-878, and Pro-881 each carry the 4-hydroxyproline modification. Residues 908 to 922 (AGPAGARGPAGPQGP) show a composition bias toward low complexity. The segment covering 923–937 (RGDKGETGEQGDRGI) has biased composition (basic and acidic residues). Lys-926 carries the post-translational modification 5-hydroxylysine. Lys-938 is subject to 5-hydroxylysine; alternate. O-linked (Gal...) hydroxylysine; alternate glycosylation occurs at Lys-938. 4 positions are modified to 4-hydroxyproline: Pro-953, Pro-956, Pro-974, and Pro-989. The span at 956–989 (PGEQGPSGASGPAGPRGPPGSAGSPGKDGLNGLP) shows a compositional bias: low complexity. Pro-994 carries the post-translational modification 3-hydroxyproline. Pro-995 is subject to 4-hydroxyproline. Residues 1007-1022 (VGPPGPPGPPGPPGPP) are compositionally biased toward pro residues. Residue Pro-1009 is modified to 3-hydroxyproline. A 4-hydroxyproline modification is found at Pro-1010. Residue Pro-1012 is modified to 3-hydroxyproline. 4-hydroxyproline is present on Pro-1013. At Pro-1015 the chain carries 3-hydroxyproline. 4-hydroxyproline occurs at positions 1016, 1019, and 1022.

The protein belongs to the fibrillar collagen family. In terms of assembly, trimers of one alpha 2(I) and two alpha 1(I) chains. Post-translationally, prolines at the third position of the tripeptide repeating unit (G-X-Y) are hydroxylated in some or all of the chains. In terms of tissue distribution, expressed in bone.

It is found in the secreted. The protein localises to the extracellular space. The protein resides in the extracellular matrix. Type I collagen is a member of group I collagen (fibrillar forming collagen). The chain is Collagen alpha-1(I) chain from Mylodon darwinii (Giant ground sloth).